Consider the following 331-residue polypeptide: Tryptophan--tRNA ligase 1 (331 aa).

ATP-binding positions include 9 to 11 (KPT) and 17 to 18 (GN). The short motif at 10 to 18 (PTGHLTLGN) is the 'HIGH' region element. Asp137 lines the L-tryptophan pocket. Residues 149–151 (GDD), Val188, and 197–201 (KMGKS) contribute to the ATP site. A 'KMSKS' region motif is present at residues 197–201 (KMGKS).

This sequence belongs to the class-I aminoacyl-tRNA synthetase family. In terms of assembly, homodimer.

The protein localises to the cytoplasm. It carries out the reaction tRNA(Trp) + L-tryptophan + ATP = L-tryptophyl-tRNA(Trp) + AMP + diphosphate + H(+). In terms of biological role, catalyzes the attachment of tryptophan to tRNA(Trp). The chain is Tryptophan--tRNA ligase 1 from Streptomyces avermitilis (strain ATCC 31267 / DSM 46492 / JCM 5070 / NBRC 14893 / NCIMB 12804 / NRRL 8165 / MA-4680).